We begin with the raw amino-acid sequence, 340 residues long: COP9 signalosome complex subunit 5 (340 aa).

In terms of domain architecture, MPN spans 52-189; sequence VRISATALIK…IGAFRTYPAD (138 aa). Positions 135, 137, and 148 each coordinate Zn(2+). The JAMM motif signature appears at 135–148; that stretch reads HSHPGYGCWLSGID.

It belongs to the peptidase M67A family. CSN5 subfamily. As to quaternary structure, component of the COP9 signalosome (CSN) complex.

It localises to the cytoplasm. Its subcellular location is the nucleus. Catalytic Component of the COP9 signalosome (CSN) complex that acts as an regulator of the ubiquitin (Ubl) conjugation pathway by mediating the deneddylation of the cullin subunit of SCF-type E3 ubiquitin-protein ligase complexes. This Gibberella zeae (strain ATCC MYA-4620 / CBS 123657 / FGSC 9075 / NRRL 31084 / PH-1) (Wheat head blight fungus) protein is COP9 signalosome complex subunit 5 (RRI1).